Reading from the N-terminus, the 149-residue chain is 3-dehydroquinate dehydratase (149 aa).

Tyrosine 23 functions as the Proton acceptor in the catalytic mechanism. Residues asparagine 74, histidine 80, and aspartate 87 each contribute to the substrate site. Histidine 100 acts as the Proton donor in catalysis. Substrate contacts are provided by residues 101-102 (LS) and arginine 111.

The protein belongs to the type-II 3-dehydroquinase family. In terms of assembly, homododecamer.

It carries out the reaction 3-dehydroquinate = 3-dehydroshikimate + H2O. It functions in the pathway metabolic intermediate biosynthesis; chorismate biosynthesis; chorismate from D-erythrose 4-phosphate and phosphoenolpyruvate: step 3/7. Its function is as follows. Catalyzes a trans-dehydration via an enolate intermediate. The protein is 3-dehydroquinate dehydratase of Ruegeria pomeroyi (strain ATCC 700808 / DSM 15171 / DSS-3) (Silicibacter pomeroyi).